Reading from the N-terminus, the 340-residue chain is CMP-N-acetylneuraminate-beta-galactosamide-alpha-2,3-sialyltransferase 1 (340 aa).

Topologically, residues 1–13 (MVTLRKRTLKVLT) are cytoplasmic. Residues 14–34 (FLVLFIFLTSFFLNYSHTMVA) traverse the membrane as a helical; Signal-anchor for type II membrane protein segment. The Lumenal portion of the chain corresponds to 35–340 (TTWFPKQMVL…INKIRIFKGR (306 aa)). Cystine bridges form between Cys-59-Cys-64, Cys-61-Cys-139, and Cys-142-Cys-281. Asn-79 carries N-linked (GlcNAc...) asparagine glycosylation. Gln-105 contributes to the substrate binding site. N-linked (GlcNAc...) asparagine glycosylation occurs at Asn-114. Substrate is bound by residues Asn-147 and Asn-170. Asn-201 carries an N-linked (GlcNAc...) asparagine glycan. Substrate-binding residues include Tyr-230, Tyr-266, Gly-270, Gly-290, His-299, and His-316. A glycan (N-linked (GlcNAc...) asparagine) is linked at Asn-323.

It belongs to the glycosyltransferase 29 family. Post-translationally, the soluble form derives from the membrane form by proteolytic processing. Expressed in several tissues. Highest expression in lung, liver, skeletal muscle, kidney, pancreas, spleen and placenta.

It localises to the golgi apparatus. Its subcellular location is the golgi stack membrane. The protein localises to the trans-Golgi network membrane. The protein resides in the secreted. It carries out the reaction a beta-D-galactosyl-(1-&gt;3)-N-acetyl-alpha-D-galactosaminyl derivative + CMP-N-acetyl-beta-neuraminate = an N-acetyl-alpha-neuraminyl-(2-&gt;3)-beta-D-galactosyl-(1-&gt;3)-N-acetyl-alpha-D-galactosaminyl derivative + CMP + H(+). It catalyses the reaction a ganglioside GM1 + CMP-N-acetyl-beta-neuraminate = a ganglioside GD1a + CMP + H(+). The enzyme catalyses a ganglioside GM1 (d18:1(4E)) + CMP-N-acetyl-beta-neuraminate = a ganglioside GD1a (d18:1(4E)) + CMP + H(+). The catalysed reaction is ganglioside GM1 (d18:1(4E)/18:0) + CMP-N-acetyl-beta-neuraminate = ganglioside GD1a (18:1(4E)/18:0) + CMP + H(+). It carries out the reaction a ganglioside GA1 + CMP-N-acetyl-beta-neuraminate = a ganglioside GM1b + CMP + H(+). It catalyses the reaction a ganglioside GA1 (d18:1(4E)) + CMP-N-acetyl-beta-neuraminate = a ganglioside GM1b (d18:1(4E)) + CMP + H(+). The enzyme catalyses a ganglioside GD1b + CMP-N-acetyl-beta-neuraminate = a ganglioside GT1b + CMP + H(+). The catalysed reaction is a 3-O-[beta-D-galactosyl-(1-&gt;3)-N-acetyl-alpha-D-galactosaminyl]-L-threonyl-[protein] + CMP-N-acetyl-beta-neuraminate = a 3-O-[N-acetyl-alpha-neuraminyl-(2-&gt;3)-beta-D-galactosyl-(1-&gt;3)-N-acetyl-alpha-D-galactosaminyl]-L-threonyl-[protein] + CMP + H(+). It carries out the reaction a 3-O-[beta-D-galactosyl-(1-&gt;3)-N-acetyl-alpha-D-galactosaminyl]-L-seryl-[protein] + CMP-N-acetyl-beta-neuraminate = 3-O-[N-acetyl-alpha-neuraminyl-(2-&gt;3)-beta-D-galactosyl-(1-&gt;3)-N-acetyl-alpha-D-galactosaminyl]-L-seryl-[protein] + CMP + H(+). The protein operates within protein modification; protein glycosylation. It participates in glycolipid biosynthesis. A beta-galactoside alpha2-&gt;3 sialyltransferase involved in terminal sialylation of glycoproteins and glycolipids. Catalyzes the transfer of sialic acid (N-acetyl-neuraminic acid; Neu5Ac) from the nucleotide sugar donor CMP-Neu5Ac onto acceptor Galbeta-(1-&gt;3)-GalNAc-terminated glycoconjugates through an alpha2-3 linkage. Adds sialic acid to the core 1 O-glycan, Galbeta-(1-&gt;3)-GalNAc-O-Ser/Thr, which is a major structure of mucin-type O-glycans. As part of a homeostatic mechanism that regulates CD8-positive T cell numbers, sialylates core 1 O-glycans of T cell glycoproteins, SPN/CD43 and PTPRC/CD45. Prevents premature apoptosis of thymic CD8-positive T cells prior to peripheral emigration, whereas in the secondary lymphoid organs controls the survival of CD8-positive memory T cells generated following a successful immune response. Transfers sialic acid to asialofetuin, presumably onto Galbeta-(1-&gt;3)-GalNAc-O-Ser. Sialylates GM1a, GA1 and GD1b gangliosides to form GD1a, GM1b and GT1b, respectively. The polypeptide is CMP-N-acetylneuraminate-beta-galactosamide-alpha-2,3-sialyltransferase 1 (Homo sapiens (Human)).